The following is a 417-amino-acid chain: NADH-quinone oxidoreductase subunit D (417 aa).

The protein belongs to the complex I 49 kDa subunit family. NDH-1 is composed of 14 different subunits. Subunits NuoB, C, D, E, F, and G constitute the peripheral sector of the complex.

Its subcellular location is the cell inner membrane. The catalysed reaction is a quinone + NADH + 5 H(+)(in) = a quinol + NAD(+) + 4 H(+)(out). In terms of biological role, NDH-1 shuttles electrons from NADH, via FMN and iron-sulfur (Fe-S) centers, to quinones in the respiratory chain. The immediate electron acceptor for the enzyme in this species is believed to be ubiquinone. Couples the redox reaction to proton translocation (for every two electrons transferred, four hydrogen ions are translocated across the cytoplasmic membrane), and thus conserves the redox energy in a proton gradient. The protein is NADH-quinone oxidoreductase subunit D of Verminephrobacter eiseniae (strain EF01-2).